The primary structure comprises 1157 residues: DNA-directed RNA polymerase subunit beta (1157 aa).

Belongs to the RNA polymerase beta chain family. As to quaternary structure, the RNAP catalytic core consists of 2 alpha, 1 beta, 1 beta' and 1 omega subunit. When a sigma factor is associated with the core the holoenzyme is formed, which can initiate transcription.

The enzyme catalyses RNA(n) + a ribonucleoside 5'-triphosphate = RNA(n+1) + diphosphate. DNA-dependent RNA polymerase catalyzes the transcription of DNA into RNA using the four ribonucleoside triphosphates as substrates. The polypeptide is DNA-directed RNA polymerase subunit beta (Tropheryma whipplei (strain TW08/27) (Whipple's bacillus)).